Here is a 356-residue protein sequence, read N- to C-terminus: Zinc finger protein 830 (356 aa).

The stretch at 11–33 (AQEELRKLMKAKQRESSSKKRIE) forms a coiled coil. A C2H2-type zinc finger spans residues 47–69 (CVVCNSLIKSELLWPAHILGKQH). A disordered region spans residues 71-195 (EKVAELKGTK…PTSSADNLPA (125 aa)). Over residues 80 to 90 (KATTSSPSNTI) the composition is skewed to polar residues. 2 stretches are compositionally biased toward basic and acidic residues: residues 99–118 (KGSEPEKQESKRTKGSEDHP) and 125–135 (LPEEFFEKEKT). The span at 150–165 (DYEDVDDDDAEEGEEY) shows a compositional bias: acidic residues. Residues 278–322 (AEEDEEGRLDRQIDEIDEQIQCYRRVEHLRDRKDTLQDAKMEVLK) adopt a coiled-coil conformation.

The protein resides in the nucleus. It is found in the chromosome. It localises to the nucleus speckle. In terms of biological role, may act as an important regulator of the cell cycle that participates in the maintenance of genome integrity. This Xenopus laevis (African clawed frog) protein is Zinc finger protein 830.